The following is a 601-amino-acid chain: uncharacterized protein (601 aa).

The next 3 membrane-spanning stretches (helical) occupy residues 74 to 94 (IFFFVYYCKQALEFISTVFSI), 104 to 124 (VSFLLSFLLLFSLFLLIPNDG), and 531 to 551 (LVLLATIPVSLSSVFEVNYYY).

It localises to the endoplasmic reticulum membrane. This is an uncharacterized protein from Schizosaccharomyces pombe (strain 972 / ATCC 24843) (Fission yeast).